The primary structure comprises 92 residues: Large ribosomal subunit protein bL27 (92 aa).

The propeptide occupies 1-9 (MLKLNLQFF). Residues 14 to 34 (GVGSTKNGRDSQSKRLGAKRA) form a disordered region.

The protein belongs to the bacterial ribosomal protein bL27 family. The N-terminus is cleaved by ribosomal processing cysteine protease Prp.

This Exiguobacterium sibiricum (strain DSM 17290 / CCUG 55495 / CIP 109462 / JCM 13490 / 255-15) protein is Large ribosomal subunit protein bL27.